A 56-amino-acid polypeptide reads, in one-letter code: Large ribosomal subunit protein bL32 (56 aa).

Over residues 1-16 (MAVQKNRKTRSKRGMR) the composition is skewed to basic residues. A disordered region spans residues 1 to 37 (MAVQKNRKTRSKRGMRRSHDALGTATMSVDSTSGETH). Polar residues predominate over residues 25-35 (ATMSVDSTSGE).

It belongs to the bacterial ribosomal protein bL32 family.

The protein is Large ribosomal subunit protein bL32 of Pseudoalteromonas atlantica (strain T6c / ATCC BAA-1087).